A 597-amino-acid polypeptide reads, in one-letter code: Alpha-1,2-mannosyltransferase MNN2 (597 aa).

Residues 1–6 (MIAKQK) lie on the Cytoplasmic side of the membrane. The helical transmembrane segment at 7–27 (IKILIGVIIVIATYHFIVSSN) threads the bilayer. The Extracellular portion of the chain corresponds to 28–597 (VRSKDLSDLV…ETAEIPTVVS (570 aa)). A disordered region spans residues 39–89 (LGSSDKSTTENERPKNNIVTNNRLDNPPNEDIPHAEPDSPPQEPPKSGNKP). Asn-382 carries an N-linked (GlcNAc...) asparagine glycan.

Belongs to the MNN1/MNT family. The cofactor is Mn(2+).

The protein resides in the golgi apparatus membrane. The protein operates within protein modification; protein glycosylation. With respect to regulation, enzyme activity is regulated by iron. Its function is as follows. Alpha-1,2-mannosyltransferase required for cell wall integrity. Responsible for addition of the first alpha-1,2-linked mannose to form the branches on the mannan backbone of oligosaccharides. Addition of alpha-1,2-mannose is required for stabilization of the alpha-1,6-mannose backbone and hence regulates mannan fibril length; and is important for both immune recognition and virulence. Promotes iron uptake and usage along the endocytosis pathway under iron-limiting conditions. The chain is Alpha-1,2-mannosyltransferase MNN2 (MNN2) from Candida albicans (strain SC5314 / ATCC MYA-2876) (Yeast).